The sequence spans 190 residues: METPALLALAVALAMDALAVAVATGCRLRTVSARQTLRLAWHFGLFQAAMPIAGWFMGQGIRSFVDAWAHWIAFGLLAFIGLKMLKEAFEHDDAECGMADPTRGTSLIMLSVATSIDALAVGVTLSMLGLSIWMPAAVIGLVCLGLTAAGVQLGRVLAASSALSRYAEILGGAVLLGIGFKILHESGVFG.

6 helical membrane-spanning segments follow: residues 5 to 25 (ALLALAVALAMDALAVAVATG), 41 to 61 (WHFGLFQAAMPIAGWFMGQGI), 64 to 84 (FVDAWAHWIAFGLLAFIGLKM), 105 to 125 (TSLIMLSVATSIDALAVGVTL), 127 to 147 (MLGLSIWMPAAVIGLVCLGLT), and 169 to 189 (ILGGAVLLGIGFKILHESGVF).

This sequence belongs to the MntP (TC 9.B.29) family.

Its subcellular location is the cell inner membrane. In terms of biological role, probably functions as a manganese efflux pump. The protein is Putative manganese efflux pump MntP of Oleidesulfovibrio alaskensis (strain ATCC BAA-1058 / DSM 17464 / G20) (Desulfovibrio alaskensis).